The primary structure comprises 279 residues: MQIIRDIAMLHRAVTALKQGGKSIALVPTMGALHAGHLSLVRMAKRVADHVVVSIFVNPTQFGPNEDFAAYPRDEARDAALLVEEGTSLLWAPDVGTMYPGGHSTHVEVAELGADYCGAARPGHFDGVATVVAKLFNQVRPDIAIFGEKDWQQLAIIRRMARDLDFGIDILGAPIAREADGLALSSRNAYLSAEQRTAAAAFPGALKTAAKAIADGADVAETLARAEAAIVGGGFDSVDYVALADADSLERLAVFRAPARLLAAARIGRTRLIDNLPVG.

30–37 contacts ATP; it reads MGALHAGH. The Proton donor role is filled by His37. Gln61 contributes to the (R)-pantoate binding site. Gln61 is a binding site for beta-alanine. 147–150 lines the ATP pocket; sequence GEKD. Gln153 serves as a coordination point for (R)-pantoate. ATP-binding positions include Ala176 and 184 to 187; that span reads LSSR.

The protein belongs to the pantothenate synthetase family. In terms of assembly, homodimer.

It localises to the cytoplasm. The catalysed reaction is (R)-pantoate + beta-alanine + ATP = (R)-pantothenate + AMP + diphosphate + H(+). Its pathway is cofactor biosynthesis; (R)-pantothenate biosynthesis; (R)-pantothenate from (R)-pantoate and beta-alanine: step 1/1. Functionally, catalyzes the condensation of pantoate with beta-alanine in an ATP-dependent reaction via a pantoyl-adenylate intermediate. The chain is Pantothenate synthetase from Sphingopyxis alaskensis (strain DSM 13593 / LMG 18877 / RB2256) (Sphingomonas alaskensis).